Consider the following 402-residue polypeptide: Type II NADH:quinone oxidoreductase (402 aa).

FAD is bound by residues 12–16 (GAGYA), 39–40 (NK), and Val-83. Glu-172 is a catalytic residue. FAD is bound by residues Asp-302, 319–320 (AQ), and Lys-379.

It belongs to the NADH dehydrogenase family. It depends on FAD as a cofactor.

It localises to the cell membrane. It carries out the reaction a quinone + NADH + H(+) = a quinol + NAD(+). Functionally, alternative, nonproton pumping NADH:quinone oxidoreductase that delivers electrons to the respiratory chain by oxidation of NADH and reduction of quinones, and contributes to the regeneration of NAD(+). The sequence is that of Type II NADH:quinone oxidoreductase from Staphylococcus aureus (strain MSSA476).